Consider the following 183-residue polypeptide: Small ribosomal subunit protein uS4c (183 aa).

The S4 RNA-binding domain maps to 82–143; sequence MRLDNILFRL…KQRSKALIQN (62 aa).

The protein belongs to the universal ribosomal protein uS4 family. Part of the 30S ribosomal subunit. Contacts protein S5. The interaction surface between S4 and S5 is involved in control of translational fidelity.

It is found in the plastid. The protein resides in the chloroplast. Functionally, one of the primary rRNA binding proteins, it binds directly to 16S rRNA where it nucleates assembly of the body of the 30S subunit. Its function is as follows. With S5 and S12 plays an important role in translational accuracy. In Schizorhiza neglecta (Lapeirousia neglecta), this protein is Small ribosomal subunit protein uS4c (rps4).